The chain runs to 541 residues: Pheromone B beta 1 receptor (541 aa).

The Extracellular segment spans residues 1–3 (MHP). A helical transmembrane segment spans residues 4-24 (EFAPVAFLSAASLALPLPWHW). Topologically, residues 25–33 (RAGNVATLS) are cytoplasmic. Residues 34-54 (IIAWLFIMNMIYGINAVIWAG) form a helical membrane-spanning segment. The Extracellular portion of the chain corresponds to 55-69 (SARITAVVYCDITTK). Residues 70 to 90 (LTIGGNFALPAACLCLCIHLE) traverse the membrane as a helical segment. Over 91-109 (RVASVRAAQTTAADKRRRT) the chain is Cytoplasmic. The helical transmembrane segment at 110–130 (IFELAMCWLLPIIFMALHYVV) threads the bilayer. Residues 131-150 (QGHRFDIVEDFGCRPATYYS) lie on the Extracellular side of the membrane. A helical membrane pass occupies residues 151–171 (IPAIFIVWVPPLTMAAASLVY). Topologically, residues 172–205 (ASLAIRHFMHRRLSFAMHLQARSSALTTSRYLRL) are cytoplasmic. A helical membrane pass occupies residues 206–226 (ILMAIVQLVWLVVTTAYTLWF). The Extracellular segment spans residues 227–264 (SSMTLNLRPWTTWADVHSNFGRIQTWPAIITPAVILRG). The helical transmembrane segment at 265-285 (ACTLWWMVPASTWIFVAFFAF) threads the bilayer. Over 286-541 (GNDAVEEYKR…IASVFPGGRR (256 aa)) the chain is Cytoplasmic. Disordered stretches follow at residues 364–393 (TTST…PLDS) and 414–541 (YTIE…GGRR). A compositionally biased stretch (pro residues) spans 372–385 (MPPPYSLPPPPPPQ). The span at 420 to 429 (PETPSTSSST) shows a compositional bias: low complexity. 2 stretches are compositionally biased toward pro residues: residues 467–478 (IPAPPSLPPPTH) and 493–502 (SRPPAFPPYP).

The protein belongs to the G-protein coupled receptor 4 family.

Its subcellular location is the membrane. Receptor for the BBP1 pheromone, a prenylated mating factor. The chain is Pheromone B beta 1 receptor (BBR1) from Schizophyllum commune (Split gill fungus).